A 2371-amino-acid chain; its full sequence is MPHFRESSSSSENGAIDHDLQHTFQRILSDDQYTKFSPNEPPLSQQLEPIAVVGMGCRLPGDVSSPSDFWKLMMEKKSGQTPKVPSSRFNIDAHFHPDNDRPGSFGVLGGYFINETLKEFDPAFFGITPVEATWMDPQQRKLLEVVYEAFESAGLTLDQLSGSDTACFMATFTADFQQMSFKEPSFRHSLAATGVDPGLLSNRVSHVFNLRGPSIVVNTACSSSVYALHNACNALRTHECSAAVVGGSNLILTVDQHMNTAKLGVMSPTSTCHTFNSYANGYGRAEGVGAIYLKRLSDAVRDGDPIRGVIRSSATNNNGKAPGVGITYPGFDGQRTVMRHAYQRSGLDPMLTGYFECHGTGTAIGDPLEVHAVSDIMNAARKDADGPLNIGAVKTNIGHSEAASGLSAVIKSILMVERGIIPPTHGVTDLNPKIDWKGWKVHVPTDPIPMPKHLPVTRVSVNSFGYGGTNAHTIIESPKSLLSAPQNYKYSMSGPTIKAKQPRGATRRNRPHLLVFSAHDTGTLKRNAAALGKVAPNYNLLDLSFTLANHRTRFQSRGMVVTTPATLQKTFTDGMPDFMVASKNVTARNLGFVFTGQGAQWAGMGQQLMTYYPTFLKAIRRMDLVLEDLDDAPSWTLEESLLENPETSRVGEAEFSQPLCTAVQVALVQLLRTWGIRPSVTLGHSSGEIAAAYAAGYLSEADAILAAYYRGQVVKSIDTSGAMMAVGLGAEAVKSYLEPFQAEVVVACHNSPVGVTLSGNIDALKAIEETLKVDGVFARLVKTNSKAYHSHHMLPAVDKYETLLRDNSQKGISGVSLNKVKMVSTVTNSVLSEDAVLDGKYWSANLVSPVLFNQAIQSALTNKDMHIDTLIEIGPHSALSGPIRQIKAELGADKVQYLPTLIRGSPCAGQVLKLAGEFFLRDYPINLSQVSMLEETSPSGKILSRSGNLIVDLPPYQWDKTKKFWAESRESKEHRSPRFPRHDVLGQLTIGGSLTEPTWRNVLRLKDLPWLRDHSLGGEAVFPAAGYLAMAMEATTQLNEMSGSPREIKSYVFRDVRIQQALVTPDDDDGIEVLFNMCPSRLATDNTATQSWDFNASSVSPEGHLKNHMAGSIRINTSNKQRAVARPVPNLPQRASGKLWNQALKKVGFNYGPTFQDMDNITFDGTSYCAQSMTNLKSTVMDNESRYVLHPAILDSCLQLMIVAIWAGRAGAMKFGAVPVNAEEIVIWRPTATQLDNSSAAKAFSWIDPRGQRLFNAHNQLLAGDGEVLMEIKSMRCTAYEAAIPQTLETNVQPEPYSQMVSKPDVSFLNGDQRDLDLADFIALAHFKNPALRVLATDASTASLLLSRIPALGLTVATGSSGVSDMEAQFAGFDNASVLSLDLNDSLARQSHEKLTRSFNLVISPGASMATLRTVSELLLEGGQAVLQQDPTFSDQGLKDAGFSGLECFLGQSMFVTSSIQTRKPVLSTVQLLYHTNPTSHMSPLELQLRDAGIKTERLKLGDSCTPGANIIALADLERPLIASMSEFDFLQIQKTLSEASKILWVSCGGSLEGSPEYAMTRGLLRSLRSERAALKATLVDFVPDDLDTNEFSLRTTSLAATLFEGDQELETEYLARDGQLLITRLVPFDIVNQRHGHNGDETQPHPFDAETNLVGKVEAGKVVFEHSRSDPEPLQETEVEFRPLATGLTAEGRAIISGASFETDFSHEASGIVTRVGDAVNKVSIGDRVVAFSSNTFSNFQRVQECLVQRLQDDEDSATMASLPLYYGAALYGLETLARLRPGESVLILPGLGLLGAAAIKVAQALGGHPSVAVRDSAEAEEVEVAFGVPRSQILVAYSPDRLMRCHEIDVVFSGSTTEPLLAEESWRNLPALSRFVSCSNSSASAAPSFASTAISRGASYLSVNITGLFKKPHILGGLLERIIELFRSGLIPAPLLNVQNIAEINHIGSPSSQSLSSTETVLVHEKGTGTVDVVQSRPRLELRSDATYLLVGCLGGLGRSLTTWMMKRGACHFAFLSRSGTDSEQARICVQELEARGANVQVFRGDAAVKEDVEMAVASISAHCPLRGVVNAAMVLRDGLFQNMSYDNWTTSIRPKVLGSKNLHEAIASLDLDFFLMTSSVSGILGTPTQANYAAANSYMDALACLRRRQGKHACAVVLPMILGVGVVAQDLDLEVSLKRKGMYGIDEEALLSAFEAAIFEQQHSQDSQSNFDHLVVGLEATKLYNARQEAEGDVDAFWTTDPRFSVLLDDMKQHSGDNQGDGEKGSILSQVKAASDSPAQAISLVRDHFISKLARVLLLDQDEFDDDGSGRSIASYGIDSMIGAELRNWIFKELGLDVAFQQLLSPSLTISKFAELVCAAQGIVLDNE.

A Ketosynthase family 3 (KS3) domain is found at 47–477; it reads LEPIAVVGMG…GTNAHTIIES (431 aa). Active-site for beta-ketoacyl synthase activity residues include Cys221, His358, and His399. Residues 593 to 905 are malonyl-CoA:ACP transacylase (MAT) domain; sequence VFTGQGAQWA…QYLPTLIRGS (313 aa). Residue Ser685 is the For malonyltransferase activity of the active site. The segment at 982 to 1120 is N-terminal hotdog fold; sequence HDVLGQLTIG…GSIRINTSNK (139 aa). The interval 982–1158 is dehydratase (DH) domain; it reads HDVLGQLTIG…FNYGPTFQDM (177 aa). In terms of domain architecture, PKS/mFAS DH spans 982–1286; it reads HDVLGQLTIG…CTAYEAAIPQ (305 aa). His1014 functions as the Proton acceptor; for dehydratase activity in the catalytic mechanism. The C-terminal hotdog fold stretch occupies residues 1132 to 1286; sequence PQRASGKLWN…CTAYEAAIPQ (155 aa). Residue Asp1195 is the Proton donor; for dehydratase activity of the active site. The enoyl reductase (ER) domain stretch occupies residues 1656–1964; sequence GKVEAGKVVF…QSLSSTETVL (309 aa). A ketoreductase (KR) domain region spans residues 1988 to 2163; the sequence is ATYLLVGCLG…KHACAVVLPM (176 aa). The Carrier domain occupies 2286-2364; the sequence is SLVRDHFISK…KFAELVCAAQ (79 aa). Ser2323 carries the O-(pantetheine 4'-phosphoryl)serine modification.

The protein operates within polyketide biosynthesis. Its function is as follows. Part of the gene cluster that mediates the biosynthesis of depudecin, a highly oxidized eleven-carbon linear polyketide that acts as a histone deacetylase (HDAC) inhibitor and makes a small contribution to pathogenesis. The reducing polyketide synthase DEP5 is the central enzyme in depudecin biosynthesis by yielding the backbone polyketide chain. The monooxygenases DEP2 and DEP4, as well as the uncharacterized protein DEP1, then act as tailoring enzymes to modify the intermediate polyketide chain into depudecin. The sequence is that of Reducing polyketide synthase DEP5 from Fusarium langsethiae.